The chain runs to 94 residues: Acylphosphatase (94 aa).

The region spanning Arg8–Arg94 is the Acylphosphatase-like domain. Catalysis depends on residues Arg23 and Asn41.

The protein belongs to the acylphosphatase family.

The catalysed reaction is an acyl phosphate + H2O = a carboxylate + phosphate + H(+). This Mycobacterium sp. (strain JLS) protein is Acylphosphatase (acyP).